The primary structure comprises 391 residues: Mannose-6-phosphate isomerase (391 aa).

Zn(2+) is bound by residues Gln97, His99, Glu134, and His255. Arg274 is a catalytic residue. N6-acetyllysine is present on Lys280.

This sequence belongs to the mannose-6-phosphate isomerase type 1 family. It depends on Zn(2+) as a cofactor.

The protein localises to the cytoplasm. It carries out the reaction D-mannose 6-phosphate = D-fructose 6-phosphate. Functionally, involved in the conversion of glucose to GDP-L-fucose, which can be converted to L-fucose, a capsular polysaccharide. The sequence is that of Mannose-6-phosphate isomerase (manA) from Escherichia coli (strain K12).